Consider the following 237-residue polypeptide: Phosphoribosylaminoimidazole-succinocarboxamide synthase (237 aa).

This sequence belongs to the SAICAR synthetase family.

The catalysed reaction is 5-amino-1-(5-phospho-D-ribosyl)imidazole-4-carboxylate + L-aspartate + ATP = (2S)-2-[5-amino-1-(5-phospho-beta-D-ribosyl)imidazole-4-carboxamido]succinate + ADP + phosphate + 2 H(+). Its pathway is purine metabolism; IMP biosynthesis via de novo pathway; 5-amino-1-(5-phospho-D-ribosyl)imidazole-4-carboxamide from 5-amino-1-(5-phospho-D-ribosyl)imidazole-4-carboxylate: step 1/2. This Edwardsiella ictaluri (strain 93-146) protein is Phosphoribosylaminoimidazole-succinocarboxamide synthase.